The following is a 305-amino-acid chain: Type II secretion system protein C (305 aa).

At Met-1 to Glu-29 the chain is on the cytoplasmic side. The helical transmembrane segment at Gly-30 to Val-50 threads the bilayer. Residues Ser-51–Phe-305 are Periplasmic-facing.

The protein belongs to the GSP C family.

Its subcellular location is the cell inner membrane. In terms of biological role, involved in a type II secretion system (T2SS, formerly general secretion pathway, GSP) for the export of proteins. Required for secretion of cholera toxin through the outer membrane. The polypeptide is Type II secretion system protein C (epsC) (Vibrio cholerae serotype O1 (strain ATCC 39315 / El Tor Inaba N16961)).